The sequence spans 76 residues: Tautomerase PptA (76 aa).

Residue Pro-2 is the Proton acceptor; via imino nitrogen of the active site.

This sequence belongs to the 4-oxalocrotonate tautomerase family. PptA subfamily. As to quaternary structure, homodimer.

The protein localises to the cytoplasm. The chain is Tautomerase PptA from Pectobacterium atrosepticum (strain SCRI 1043 / ATCC BAA-672) (Erwinia carotovora subsp. atroseptica).